Consider the following 280-residue polypeptide: Suppressor of disruption of TFIIS (280 aa).

It belongs to the SSM1 family.

Could be an enzyme that inactivates 6-azauracil by modifying it. This chain is Suppressor of disruption of TFIIS (SDT1), found in Saccharomyces cerevisiae (strain ATCC 204508 / S288c) (Baker's yeast).